A 449-amino-acid chain; its full sequence is Glucose-6-phosphate isomerase (449 aa).

Glu-291 acts as the Proton donor in catalysis. Residues His-312 and Lys-426 contribute to the active site.

The protein belongs to the GPI family.

Its subcellular location is the cytoplasm. It carries out the reaction alpha-D-glucose 6-phosphate = beta-D-fructose 6-phosphate. It functions in the pathway carbohydrate biosynthesis; gluconeogenesis. The protein operates within carbohydrate degradation; glycolysis; D-glyceraldehyde 3-phosphate and glycerone phosphate from D-glucose: step 2/4. Catalyzes the reversible isomerization of glucose-6-phosphate to fructose-6-phosphate. This Streptococcus gordonii (strain Challis / ATCC 35105 / BCRC 15272 / CH1 / DL1 / V288) protein is Glucose-6-phosphate isomerase.